Reading from the N-terminus, the 415-residue chain is Glucose-6-phosphate isomerase (415 aa).

The active-site Proton donor is E267. Residues H293 and K406 contribute to the active site.

This sequence belongs to the GPI family.

Its subcellular location is the cytoplasm. It catalyses the reaction alpha-D-glucose 6-phosphate = beta-D-fructose 6-phosphate. The protein operates within carbohydrate biosynthesis; gluconeogenesis. Its pathway is carbohydrate degradation; glycolysis; D-glyceraldehyde 3-phosphate and glycerone phosphate from D-glucose: step 2/4. Catalyzes the reversible isomerization of glucose-6-phosphate to fructose-6-phosphate. This chain is Glucose-6-phosphate isomerase, found in Thermus thermophilus (strain ATCC 27634 / DSM 579 / HB8).